A 508-amino-acid polypeptide reads, in one-letter code: Amphoterin-induced protein 3 (508 aa).

Residues 1-19 (MAWLVLLGLLLCMLGAGSG) form the signal peptide. The Extracellular segment spans residues 20–383 (TSDLEGVLPP…PRPEPEAFNT (364 aa)). The 37-residue stretch at 25-61 (GVLPPDPHNCPNKCVCAADVLSCAGRGLQDLPAALPA) folds into the LRRNT domain. Cystine bridges form between C34–C40 and C38–C47. 6 LRR repeats span residues 62 to 83 (TAAE…WLAP), 86 to 107 (RLRA…VFTN), 110 to 131 (GLRI…DLDG), 134 to 155 (ELEK…AFQG), 158 to 178 (MLSH…NHLH), and 184 to 207 (RLRT…AALP). N107 is a glycosylation site (N-linked (GlcNAc...) asparagine). In terms of domain architecture, LRRCT spans 219 to 275 (NPLPCDCSLYHLLRRWHQRGLSALHDFEREYTCLAFKVAESRVRFFEHSRVFKNCSV). Intrachain disulfides connect C223–C251, C225–C273, and C300–C352. N272, N301, N362, and N368 each carry an N-linked (GlcNAc...) asparagine glycan. Residues 279-370 (PGLELPEEEL…HNQTLEYNVS (92 aa)) enclose the Ig-like C2-type domain. A helical transmembrane segment spans residues 384–404 (GFTTLLGCIVGLVLVLLYLFA). Topologically, residues 405-508 (PPCRGCCRCC…STGSEGLMMS (104 aa)) are cytoplasmic.

Belongs to the immunoglobulin superfamily. AMIGO family. In terms of assembly, binds AMIGO1 or AMIGO2.

It is found in the membrane. May mediate heterophilic cell-cell interaction. May contribute to signal transduction through its intracellular domain. The chain is Amphoterin-induced protein 3 from Rattus norvegicus (Rat).